Reading from the N-terminus, the 150-residue chain is Male-specific protein scotti (150 aa).

The tract at residues 60-84 is disordered; sequence PPMAVFPARGGPNGGPPRLRKKRSF. An N-linked (GlcNAc...) asparagine glycan is attached at Asn-131.

It belongs to the male-specific scotti family.

Post-meiotically transcribed gene that has a role in late spermiogenesis; required for actin cone progression during spermatid individualization. This is Male-specific protein scotti from Drosophila yakuba (Fruit fly).